We begin with the raw amino-acid sequence, 320 residues long: L-lactate dehydrogenase (320 aa).

Residues Val19, Asp40, Arg45, and 85–86 each bind NAD(+); that span reads GA. Residues Gln88 and Arg94 each coordinate substrate. NAD(+) is bound by residues Ser107, 124 to 126, and Ser149; that span reads ITN. A substrate-binding site is contributed by 126–129; that stretch reads NPVD. 154–157 is a substrate binding site; it reads DSAR. Arg159 and His174 together coordinate beta-D-fructose 1,6-bisphosphate. His181 (proton acceptor) is an active-site residue. Tyr228 is modified (phosphotyrosine). Thr237 serves as a coordination point for substrate.

This sequence belongs to the LDH/MDH superfamily. LDH family. In terms of assembly, homotetramer.

The protein resides in the cytoplasm. The enzyme catalyses (S)-lactate + NAD(+) = pyruvate + NADH + H(+). It functions in the pathway fermentation; pyruvate fermentation to lactate; (S)-lactate from pyruvate: step 1/1. Its activity is regulated as follows. Allosterically activated by fructose 1,6-bisphosphate (FBP). In terms of biological role, catalyzes the conversion of lactate to pyruvate. This chain is L-lactate dehydrogenase, found in Bifidobacterium animalis subsp. lactis (strain AD011).